The chain runs to 203 residues: Glycerol-3-phosphate acyltransferase (203 aa).

Residues methionine 1–alanine 3 are Periplasmic-facing. A helical transmembrane segment spans residues isoleucine 4–valine 24. The Cytoplasmic segment spans residues cysteine 25–lysine 52. Residues glycine 53–alanine 73 traverse the membrane as a helical segment. Topologically, residues tyrosine 74–proline 80 are periplasmic. The helical transmembrane segment at phenylalanine 81–glycine 101 threads the bilayer. At phenylalanine 102–alanine 111 the chain is on the cytoplasmic side. Residues phenylalanine 112–leucine 132 form a helical membrane-spanning segment. Topologically, residues threonine 133–serine 137 are periplasmic. A helical transmembrane segment spans residues glycine 138–phenylalanine 158. Residues lysine 159–aspartate 203 lie on the Cytoplasmic side of the membrane.

It belongs to the PlsY family. As to quaternary structure, probably interacts with PlsX.

It localises to the cell inner membrane. The enzyme catalyses sn-glycerol 3-phosphate + an acyl-CoA = a 1-acyl-sn-glycero-3-phosphate + CoA. It catalyses the reaction a fatty acyl-[ACP] + sn-glycerol 3-phosphate = a 1-acyl-sn-glycero-3-phosphate + holo-[ACP]. The protein operates within lipid metabolism; phospholipid metabolism. In terms of biological role, catalyzes the transfer of an acyl group from acyl-ACP to glycerol-3-phosphate (G3P) to form lysophosphatidic acid (LPA). This enzyme can also utilize acyl-CoA as fatty acyl donor, but not acyl-PO(4). This chain is Glycerol-3-phosphate acyltransferase, found in Salmonella agona (strain SL483).